The chain runs to 290 residues: MAAEFKHISVLKEELVAGLGVKPEGHYLDVTLGGGGHTELILQQYPDVRVTGVDRDSQAIAAASERLKSFGDRFRAVRSNFGEYQPQGEKFDGIIADLGVSSVQFDQGDRGFSFRFDAPLDMRMDQQQTLTAADIVNTYEEKALANLFYEYGDERLSRQIAKKIVMKRPIQTTKELEEIVFYTYHPKARKVKIHPATRVFQALRIAVNGELDALQYLLVNAPQWLKPQGRLGIISFHSLEDRLVKNAFRQRDIWRILTKKPMVASETEINQNPRARSAKLRFAELKETTE.

S-adenosyl-L-methionine-binding positions include 35–37, Asp54, Phe81, Asp97, and Gln104; that span reads GGH.

It belongs to the methyltransferase superfamily. RsmH family.

It is found in the cytoplasm. The enzyme catalyses cytidine(1402) in 16S rRNA + S-adenosyl-L-methionine = N(4)-methylcytidine(1402) in 16S rRNA + S-adenosyl-L-homocysteine + H(+). In terms of biological role, specifically methylates the N4 position of cytidine in position 1402 (C1402) of 16S rRNA. The polypeptide is Ribosomal RNA small subunit methyltransferase H (Picosynechococcus sp. (strain ATCC 27264 / PCC 7002 / PR-6) (Agmenellum quadruplicatum)).